Consider the following 569-residue polypeptide: 3-(3-hydroxy-phenyl)propionate/3-hydroxycinnamic acid hydroxylase (569 aa).

FAD-binding positions include 8 to 37 (DVVIVGAGPAGLTLANILGLEGVRVLVVDE) and 273 to 283 (FREGRLMLAGD).

The protein belongs to the PheA/TfdB FAD monooxygenase family. The cofactor is FAD.

The catalysed reaction is 3-(3-hydroxyphenyl)propanoate + NADH + O2 + H(+) = 3-(2,3-dihydroxyphenyl)propanoate + NAD(+) + H2O. It catalyses the reaction (2E)-3-(3-hydroxyphenyl)prop-2-enoate + NADH + O2 + H(+) = (2E)-3-(2,3-dihydroxyphenyl)prop-2-enoate + NAD(+) + H2O. The protein operates within aromatic compound metabolism; 3-phenylpropanoate degradation. In terms of biological role, catalyzes the insertion of one atom of molecular oxygen into position 2 of the phenyl ring of 3-(3-hydroxyphenyl)propionate (3-HPP) and hydroxycinnamic acid (3HCI). This is 3-(3-hydroxy-phenyl)propionate/3-hydroxycinnamic acid hydroxylase from Mycolicibacterium gilvum (strain PYR-GCK) (Mycobacterium gilvum (strain PYR-GCK)).